The chain runs to 101 residues: MLKKNDSVVILSGKDKGKKGEIKEVIASKNRVIVSGVNIVSKHEKPAGNKKGGIIKVEAPLHISNVAIVCKKCNKAMTPKHTVANDGAKVRVCRKCGETVK.

This sequence belongs to the universal ribosomal protein uL24 family. As to quaternary structure, part of the 50S ribosomal subunit.

Its function is as follows. One of two assembly initiator proteins, it binds directly to the 5'-end of the 23S rRNA, where it nucleates assembly of the 50S subunit. Functionally, one of the proteins that surrounds the polypeptide exit tunnel on the outside of the subunit. This chain is Large ribosomal subunit protein uL24, found in Elusimicrobium minutum (strain Pei191).